We begin with the raw amino-acid sequence, 105 residues long: uncharacterized protein (105 aa).

The protein resides in the cytoplasm. It is found in the nucleus. This is an uncharacterized protein from Schizosaccharomyces pombe (strain 972 / ATCC 24843) (Fission yeast).